A 718-amino-acid polypeptide reads, in one-letter code: Polyribonucleotide nucleotidyltransferase (718 aa).

Mg(2+) is bound by residues D496 and D502. A KH domain is found at 563–622 (PRLLTIKIDPDMIGLVIGPGGKTIKGITEETGAKIDIEDDGTVTISAVDENKAKRARNIV). The 69-residue stretch at 632–700 (GDVYAGRVTR…NKGRINLTRL (69 aa)) folds into the S1 motif domain.

This sequence belongs to the polyribonucleotide nucleotidyltransferase family. Requires Mg(2+) as cofactor.

It is found in the cytoplasm. It carries out the reaction RNA(n+1) + phosphate = RNA(n) + a ribonucleoside 5'-diphosphate. In terms of biological role, involved in mRNA degradation. Catalyzes the phosphorolysis of single-stranded polyribonucleotides processively in the 3'- to 5'-direction. The sequence is that of Polyribonucleotide nucleotidyltransferase from Trichormus variabilis (strain ATCC 29413 / PCC 7937) (Anabaena variabilis).